The primary structure comprises 238 residues: SPbeta prophage-derived uncharacterized protein YorM (238 aa).

A signal peptide spans 1–37 (MFKKLIDKHKKYVYHRINKMALFATIGLLGVGLVYSA). The span at 111–121 (TKTKKVQKTNT) shows a compositional bias: basic residues. The disordered stretch occupies residues 111 to 132 (TKTKKVQKTNTKRNLDKAVSKS).

The protein is SPbeta prophage-derived uncharacterized protein YorM (yorM) of Bacillus subtilis (strain 168).